An 811-amino-acid chain; its full sequence is Protein MEI2-like 5 (811 aa).

RRM domains are found at residues 193–266 (RTLF…YSIP) and 278–351 (GTLV…PSRP). Positions 371 to 397 (TKHNSFQIGSPSANSPPSLWSQLGSPT) are disordered. Positions 374–397 (NSFQIGSPSANSPPSLWSQLGSPT) are enriched in polar residues.

Its function is as follows. Probable RNA-binding protein that may play a role in growth regulation. The polypeptide is Protein MEI2-like 5 (ML5) (Oryza sativa subsp. japonica (Rice)).